A 1051-amino-acid chain; its full sequence is Putative helicase/primase complex protein (1051 aa).

This sequence belongs to the asfivirus F1055L family.

In terms of biological role, may be involved in DNA replication. The polypeptide is Putative helicase/primase complex protein (Ornithodoros (relapsing fever ticks)).